Reading from the N-terminus, the 158-residue chain is Regulator of sigma D (158 aa).

It belongs to the Rsd/AlgQ family. In terms of assembly, interacts with RpoD.

The protein localises to the cytoplasm. Binds RpoD and negatively regulates RpoD-mediated transcription activation by preventing the interaction between the primary sigma factor RpoD with the catalytic core of the RNA polymerase and with promoter DNA. May be involved in replacement of the RNA polymerase sigma subunit from RpoD to RpoS during the transition from exponential growth to the stationary phase. The polypeptide is Regulator of sigma D (Escherichia coli (strain UTI89 / UPEC)).